The primary structure comprises 424 residues: 3-isopropylmalate dehydratase large subunit 1 (424 aa).

3 residues coordinate [4Fe-4S] cluster: Cys-303, Cys-363, and Cys-366.

The protein belongs to the aconitase/IPM isomerase family. LeuC type 2 subfamily. In terms of assembly, heterodimer of LeuC and LeuD. [4Fe-4S] cluster is required as a cofactor.

The enzyme catalyses (2R,3S)-3-isopropylmalate = (2S)-2-isopropylmalate. It functions in the pathway amino-acid biosynthesis; L-leucine biosynthesis; L-leucine from 3-methyl-2-oxobutanoate: step 2/4. In terms of biological role, catalyzes the isomerization between 2-isopropylmalate and 3-isopropylmalate, via the formation of 2-isopropylmaleate. The polypeptide is 3-isopropylmalate dehydratase large subunit 1 (Pyrococcus furiosus (strain ATCC 43587 / DSM 3638 / JCM 8422 / Vc1)).